Reading from the N-terminus, the 401-residue chain is MAKEIFKKQKPHINIGTIGHVDHGKTTLTAAITYVLAKNNQAKLKTYKEIDCAPEEIARGITIKTSHIEYETAVRHYAHIDCPGHADYIKNMITGAAQMDGAILVVSAVDGPMPQTKEHLLLAKQIGISNIIVFLNKIDLIDDNEILELVELETRELLDKYNFSSDTPIITGSALKALDNNLTSNIWVDKIYELLTALDSYIPLPKRDLDKPFLLAIEDIFSITGRGTVVTGKIERGSIKLGDTVTMLGFNISKNVVVIGLEMFQKTLEIGEAGDNVGILLRGIQKTEVKRGMILSKPLTMTLHSIFQADVYILTVAEGGREKPIFEGYCPQFYLYTINITGSIKFSSETKETGTKMILPGDRVKLNVTLIYSIAMEKGMRFAIREGGRTIGAGIITDIIK.

Positions lysine 10–lysine 206 constitute a tr-type G domain. Residues glycine 19–threonine 26 form a G1 region. Glycine 19–threonine 26 lines the GTP pocket. Threonine 26 contacts Mg(2+). Residues glycine 60–lysine 64 are G2. Positions aspartate 81 to glycine 84 are G3. GTP contacts are provided by residues aspartate 81–histidine 85 and asparagine 136–aspartate 139. The segment at asparagine 136–aspartate 139 is G4. The interval serine 173–leucine 175 is G5.

This sequence belongs to the TRAFAC class translation factor GTPase superfamily. Classic translation factor GTPase family. EF-Tu/EF-1A subfamily. Monomer.

The protein localises to the plastid. It localises to the apicoplast. It catalyses the reaction GTP + H2O = GDP + phosphate + H(+). Its function is as follows. GTP hydrolase that promotes the GTP-dependent binding of aminoacyl-tRNA to the A-site of ribosomes during protein biosynthesis. The chain is Elongation factor Tu, apicoplast (tufA) from Toxoplasma gondii.